The primary structure comprises 117 residues: Ig heavy chain V region 1-62-3 (117 aa).

Positions 1–19 are cleaved as a signal peptide; that stretch reads MGWSCIMLFLAATATGVHF. The interval 20-49 is framework-1; that stretch reads QVQLQQPGAELVKPGASVKLSSKASGYTFT. The complementarity-determining-1 stretch occupies residues 50 to 54; the sequence is SYWMH. The framework-2 stretch occupies residues 55–68; it reads WVKQRPGRGLEWIG. Residues 69–85 form a complementarity-determining-2 region; the sequence is RIDPNSGGTKYNEKFKS. Residues 86–117 are framework-3; the sequence is KATLTVDKPSSTAYMQLSSLTSEDSAVYYCAR.

The polypeptide is Ig heavy chain V region 1-62-3 (Ighv1-62-3) (Mus musculus (Mouse)).